The primary structure comprises 242 residues: Octanoyltransferase (242 aa).

The BPL/LPL catalytic domain occupies 31–206 (SQTTDEIWFL…LFLKNFGYNQ (176 aa)). Substrate is bound by residues 70–77 (RGGQVTYH), 137–139 (SIG), and 150–152 (GLA). Cys-168 acts as the Acyl-thioester intermediate in catalysis.

This sequence belongs to the LipB family.

It is found in the cytoplasm. It catalyses the reaction octanoyl-[ACP] + L-lysyl-[protein] = N(6)-octanoyl-L-lysyl-[protein] + holo-[ACP] + H(+). It functions in the pathway protein modification; protein lipoylation via endogenous pathway; protein N(6)-(lipoyl)lysine from octanoyl-[acyl-carrier-protein]: step 1/2. Its function is as follows. Catalyzes the transfer of endogenously produced octanoic acid from octanoyl-acyl-carrier-protein onto the lipoyl domains of lipoate-dependent enzymes. Lipoyl-ACP can also act as a substrate although octanoyl-ACP is likely to be the physiological substrate. The polypeptide is Octanoyltransferase (Coxiella burnetii (strain RSA 493 / Nine Mile phase I)).